The primary structure comprises 1061 residues: Bifunctional cytochrome P450/NADPH--P450 reductase 1 (1061 aa).

The cytochrome P450 stretch occupies residues 1–475; the sequence is MKETSPIPQP…AEKAAPDEQK (475 aa). Cysteine 403 lines the heme pocket. The tract at residues 476–1061 is NADPH--P450 reductase; that stretch reads EKTEAKGASV…MYAKDVWAGI (586 aa). In terms of domain architecture, Flavodoxin-like spans 493-632; that stretch reads LLVLYGSDTG…QLDEWKKSMW (140 aa). FMN-binding positions include 499–504, 546–549, 580–582, and 588–590; these read SDTGTA, SYNG, CGD, and TYQ. In terms of domain architecture, FAD-binding FR-type spans 671 to 904; it reads YEASHASIAE…RTPESRFQLP (234 aa).

It in the N-terminal section; belongs to the cytochrome P450 family. It depends on FAD as a cofactor. The cofactor is FMN. Heme b is required as a cofactor.

It localises to the cytoplasm. The catalysed reaction is an organic molecule + reduced [NADPH--hemoprotein reductase] + O2 = an alcohol + oxidized [NADPH--hemoprotein reductase] + H2O + H(+). The enzyme catalyses 2 oxidized [cytochrome P450] + NADPH = 2 reduced [cytochrome P450] + NADP(+) + H(+). Its function is as follows. Functions as a fatty acid monooxygenase. Catalyzes hydroxylation of a range of long-chain fatty acids, with a preference for long-chain unsaturated and branched-chain fatty acids over saturated fatty acids. Hydroxylation of myristic acid occurs mainly at the omega-2 position. Also displays a NADPH-dependent reductase activity in the C-terminal domain, which allows electron transfer from NADPH to the heme iron of the cytochrome P450 N-terminal domain. Is also able to catalyze efficient oxidation of sodium dodecyl sulfate (SDS). The sequence is that of Bifunctional cytochrome P450/NADPH--P450 reductase 1 from Bacillus subtilis (strain 168).